The chain runs to 594 residues: DNA ligase (594 aa).

E256 is an ATP binding site. Residue K258 is the N6-AMP-lysine intermediate of the active site. Residues R263, R279, E309, F349, R426, and K432 each coordinate ATP.

This sequence belongs to the ATP-dependent DNA ligase family. It depends on Mg(2+) as a cofactor.

The enzyme catalyses ATP + (deoxyribonucleotide)n-3'-hydroxyl + 5'-phospho-(deoxyribonucleotide)m = (deoxyribonucleotide)n+m + AMP + diphosphate.. DNA ligase that seals nicks in double-stranded DNA during DNA replication, DNA recombination and DNA repair. This is DNA ligase from Ignicoccus hospitalis (strain KIN4/I / DSM 18386 / JCM 14125).